Reading from the N-terminus, the 256-residue chain is Type III pantothenate kinase (256 aa).

Position 6–13 (6–13) interacts with ATP; sequence DIGNTHIV. 109–112 is a substrate binding site; that stretch reads GADR. Asp-111 (proton acceptor) is an active-site residue. Asp-132 is a binding site for K(+). Position 135 (Thr-135) interacts with ATP. Thr-186 contacts substrate.

The protein belongs to the type III pantothenate kinase family. Homodimer. Requires NH4(+) as cofactor. K(+) serves as cofactor.

It is found in the cytoplasm. It catalyses the reaction (R)-pantothenate + ATP = (R)-4'-phosphopantothenate + ADP + H(+). Its pathway is cofactor biosynthesis; coenzyme A biosynthesis; CoA from (R)-pantothenate: step 1/5. Its function is as follows. Catalyzes the phosphorylation of pantothenate (Pan), the first step in CoA biosynthesis. The sequence is that of Type III pantothenate kinase from Fusobacterium nucleatum subsp. nucleatum (strain ATCC 25586 / DSM 15643 / BCRC 10681 / CIP 101130 / JCM 8532 / KCTC 2640 / LMG 13131 / VPI 4355).